We begin with the raw amino-acid sequence, 184 residues long: Adenine phosphoribosyltransferase (184 aa).

Belongs to the purine/pyrimidine phosphoribosyltransferase family. Homodimer.

It is found in the cytoplasm. The enzyme catalyses AMP + diphosphate = 5-phospho-alpha-D-ribose 1-diphosphate + adenine. It functions in the pathway purine metabolism; AMP biosynthesis via salvage pathway; AMP from adenine: step 1/1. In terms of biological role, catalyzes a salvage reaction resulting in the formation of AMP, that is energically less costly than de novo synthesis. This is Adenine phosphoribosyltransferase from Shewanella baltica (strain OS223).